The following is a 75-amino-acid chain: Small capsomere-interacting protein (75 aa).

It belongs to the herpesviridae small capsomere-interacting protein family. In terms of assembly, interacts with the major capsid protein/MCP.

Its subcellular location is the virion. It localises to the host nucleus. Functionally, participates in the assembly of the infectious particles by decorating the outer surface of the capsid shell and thus forming a layer between the capsid and the tegument. Complexes composed of the major capsid protein and small capsomere-interacting protein/SCP assemble together in the host cytoplasm and are translocated to the nucleus, where they accumulate and participate in capsid assembly. This Homo sapiens (Human) protein is Small capsomere-interacting protein.